The chain runs to 193 residues: ATP-dependent Clp protease proteolytic subunit (193 aa).

Ser98 acts as the Nucleophile in catalysis. His123 is an active-site residue.

It belongs to the peptidase S14 family. Fourteen ClpP subunits assemble into 2 heptameric rings which stack back to back to give a disk-like structure with a central cavity, resembling the structure of eukaryotic proteasomes.

It is found in the cytoplasm. It carries out the reaction Hydrolysis of proteins to small peptides in the presence of ATP and magnesium. alpha-casein is the usual test substrate. In the absence of ATP, only oligopeptides shorter than five residues are hydrolyzed (such as succinyl-Leu-Tyr-|-NHMec, and Leu-Tyr-Leu-|-Tyr-Trp, in which cleavage of the -Tyr-|-Leu- and -Tyr-|-Trp bonds also occurs).. In terms of biological role, cleaves peptides in various proteins in a process that requires ATP hydrolysis. Has a chymotrypsin-like activity. Plays a major role in the degradation of misfolded proteins. ClpXP is involved in the complete degradation of the Site-2 clipped anti-sigma-W factor RsiW. This results in the release of SigW and the transcription activation of the genes under the control of the sigma-W factor. The polypeptide is ATP-dependent Clp protease proteolytic subunit (Oceanobacillus iheyensis (strain DSM 14371 / CIP 107618 / JCM 11309 / KCTC 3954 / HTE831)).